A 204-amino-acid polypeptide reads, in one-letter code: MANQPRPKVKKSRALGIALTPKAVKYFEARPYPPGEHGRGRKQNSDYKVRLLEKQRLRAQYDLSERQLVRAYERASKTNMKTGEALVIELERRLDALVLRSGIARTIYQARQMVVHGHIQVNGQKVDKPSFRVRPDDVVQVRERSKEKTLFTIAREGGFAPDGETPRYLQVNLKALAFRLDREPNRKEIPVICDEQLVVEYYAR.

Residues 92-153 (RRLDALVLRS…RSKEKTLFTI (62 aa)) enclose the S4 RNA-binding domain.

The protein belongs to the universal ribosomal protein uS4 family. As to quaternary structure, part of the 30S ribosomal subunit. Contacts protein S5. The interaction surface between S4 and S5 is involved in control of translational fidelity.

One of the primary rRNA binding proteins, it binds directly to 16S rRNA where it nucleates assembly of the body of the 30S subunit. In terms of biological role, with S5 and S12 plays an important role in translational accuracy. The protein is Small ribosomal subunit protein uS4 of Streptomyces coelicolor (strain ATCC BAA-471 / A3(2) / M145).